A 790-amino-acid polypeptide reads, in one-letter code: Phenylalanine--tRNA ligase beta subunit (790 aa).

The region spanning 39 to 154 (PDSLNTVVTG…ENTPLGESAC (116 aa)) is the tRNA-binding domain. The region spanning 404–483 (SDPLSLNIRP…FVQKTQKILP (80 aa)) is the B5 domain. Mg(2+) contacts are provided by Asp-457, Asp-463, Glu-466, and Glu-467. Residues 694–790 (PIYPSSSRDI…NLANIGKGNS (97 aa)) enclose the FDX-ACB domain.

This sequence belongs to the phenylalanyl-tRNA synthetase beta subunit family. Type 1 subfamily. As to quaternary structure, tetramer of two alpha and two beta subunits. Mg(2+) serves as cofactor.

Its subcellular location is the cytoplasm. The catalysed reaction is tRNA(Phe) + L-phenylalanine + ATP = L-phenylalanyl-tRNA(Phe) + AMP + diphosphate + H(+). In Chlamydia muridarum (strain MoPn / Nigg), this protein is Phenylalanine--tRNA ligase beta subunit (pheT).